The chain runs to 292 residues: Cholesterol ring-cleaving hydrolase IpdA subunit (292 aa).

Belongs to the 3-oxoacid CoA-transferase subunit A family. In terms of assembly, heterotetramer composed of 2 IpdA subunits and 2 IpdB subunits.

The enzyme catalyses (3E)-2-(2-carboxylatoethyl)-3-methyl-6-oxocyclohex-1-ene-1-carboxyl-CoA + H2O = 6-methyl-3,7-dioxodecanedioyl-CoA. The protein operates within steroid metabolism; cholesterol degradation. Its function is as follows. Involved in the final steps of cholesterol and steroid degradation. Opens the last steroid ring of cholesterol by catalyzing the hydrolysis of (3E)-2-(2-carboxylatoethyl)-3-methyl-6-oxocyclohex-1-ene-1-carboxyl-CoA (COCHEA-CoA) to 6-methyl-3,7-dioxodecanedioyl-CoA (MeDODA-CoA). The chain is Cholesterol ring-cleaving hydrolase IpdA subunit from Mycobacterium tuberculosis (strain CDC 1551 / Oshkosh).